The chain runs to 530 residues: MQAQTQVKGLKELGLEPSEIFHNLSYDEIYEHEKKNGETVVSSNGTMMVDTGIFTGRSPKDKYFVDEPSSNGNIWWSHINFKVSEAIFDELYKKCVNYLSHKKLYVFDGYAGANPETRVSLRVVSEKAWQHHFCTNMFLRPTKEELVGLDPEFTIINACGIKNENFKQHGMNSEVFVIFHLAKKICIIGGTEYGGEMKKGIFSVMNYKLPLQGILSMHCSANVGQDGDTALFFGLSGTGKTTLSTDPNRKLIGDDEHGWDDNGIFNIEGGCYAKVINLDPKTEPDIYEAIRKDALLENVVYDPQTKIVDYSSAAKTENTRVSYPIFHINNIQVPSKGGHPKTIIFLTYDAFGVLPPVSKLSIEQAMYHFLSGYTAKVAGTERGIKEPTATFSACFGAAFMTLHPTKYAKLLGEKMKKHNVRAYLMNTGLVGGSYGVGKRMNLPSTRKIIDEILNGNIEKSEFVTHPVFQVAYPKTISGVDSAILDPREAWTDKAAYDQTAKKLGEMFIKNFKQYAEGSKDFDFTAFGPKI.

3 residues coordinate substrate: Arg57, Tyr193, and Lys199. ATP-binding positions include Lys199, His218, and 234–242 (GLSGTGKTT). Residues Lys199 and His218 each contribute to the Mn(2+) site. Residue Asp255 participates in Mn(2+) binding. Glu283, Arg320, and Thr445 together coordinate ATP. Residue Arg320 participates in substrate binding.

This sequence belongs to the phosphoenolpyruvate carboxykinase (ATP) family. Requires Mn(2+) as cofactor.

Its subcellular location is the cytoplasm. It carries out the reaction oxaloacetate + ATP = phosphoenolpyruvate + ADP + CO2. Its pathway is carbohydrate biosynthesis; gluconeogenesis. Involved in the gluconeogenesis. Catalyzes the conversion of oxaloacetate (OAA) to phosphoenolpyruvate (PEP) through direct phosphoryl transfer between the nucleoside triphosphate and OAA. The protein is Phosphoenolpyruvate carboxykinase (ATP) of Leptospira interrogans serogroup Icterohaemorrhagiae serovar copenhageni (strain Fiocruz L1-130).